A 479-amino-acid chain; its full sequence is MLFWHTQPEHYNQHNSGSYLRDVLALPIFKQEEPQLSPENGARLPPLQYVLCAATSPAVKLHEETLTYLNQGQSYEIRLLENRKLGDFQDLNTKYVKSIIRVVFHDRRLQYTEYQQLEGWRWSRPGDRILDIDIPLSVGILDPRASPTQLNAVEFLWDPSKRASAFIQVHCISTEFTPRKHGGEKGVPFRVQIDTFKQNESGDYSEHLHSASCQIKVFKPKGADRKQKTDREKMEKRTAQEKEKYQPSYETTILTECSPWPDVPYQANNTPSPSYNGSPNSFGLREGNSSPNHPVEPLPLGSDHLLPSASIQDAQQWLHRNRFSQFCWLFASFSGADLLKMSRDDLVQVCGPADGIRLFNAIKGRNVRPKMTIYVCQELEQNQLPLPQKQDDSGDNSLCVYHAIFLEELTTLELTEKIASLYSIPPQHIHRVYRQGPAGIHVVVSNEMVQNFQDESCFILSTLKAESNDGYHIILKCGL.

The tract at residues Met-1–Cys-52 is mediate transcriptional repression. Positions Arg-43–Asn-280 constitute a Grh/CP2 DB domain. Disordered regions lie at residues Lys-219–Ser-248 and Trp-260–Gly-301. Over residues Lys-221–Tyr-245 the composition is skewed to basic and acidic residues. Positions Pro-261–Arg-365 are SAM2-like domain. Polar residues predominate over residues Gln-266–Asn-292.

The protein belongs to the grh/CP2 family. CP2 subfamily. As to quaternary structure, forms homohexamers via its SAM-like domain. Interacts with Mta1; which is indispensable for Tfcp2l1-mediated self-renewal-promoting effect and endoderm-inhibiting action. As to expression, highly expressed in placenta, testis, small intestine, kidney and stomach. Low levels of expression in lung, mesenteric lymph nodes, muscle, ovary, and thymus. No expression was detected in brain, heart, liver, and spleen. Expressed in eccrine glands in the palm. Expression is prominent in both kidney collecting ducts intercalated (IC) and principal (PC) cells. Also expressed in the thick limb of Henle and connecting segments of the nephron.

Its subcellular location is the nucleus. Transcription factor that facilitates establishment and maintenance of pluripotency in embryonic stem cells (ESCs). With Klf2, acts as the major effector of self-renewal that mediates induction of pluripotency downstream of LIF/Stat3 and Wnt/beta-catenin signaling. Required for normal duct development in the salivary gland and kidney. Coordinates the development of the kidney collecting ducts intercalated (IC) and principal (PC) cells, which regulate acid-base and salt-water homeostasis, respectively. Regulates the expression of IC genes including subunits B1 and D2 of the V-ATPase complex, Oxgr1, Ca12, Slc4a1, Aqp6 and IC-specific transcription factor Foxi1. Also regulates the expression of Jag1 and subsequent notch signaling in the collecting duct. Jag1 initiates notch signaling in PCs but inhibits notch signaling in ICs. Acts as a transcriptional suppressor that may suppress UBP1-mediated transcriptional activation. Modulates the placental expression of CYP11A1. This chain is Transcription factor CP2-like protein 1 (Tfcp2l1), found in Mus musculus (Mouse).